The sequence spans 276 residues: Undecaprenyl-diphosphatase (276 aa).

8 helical membrane-spanning segments follow: residues 1–21, 40–60, 93–113, 120–140, 154–174, 199–219, 227–247, and 255–275; these read MELY…FLPV, ALSF…LVFF, VRLA…GLIL, LFSS…FLWL, IGFG…IPGI, FLLS…ESFA, VTLL…VALL, and FYLF…AGFV.

This sequence belongs to the UppP family.

It is found in the cell inner membrane. The enzyme catalyses di-trans,octa-cis-undecaprenyl diphosphate + H2O = di-trans,octa-cis-undecaprenyl phosphate + phosphate + H(+). Catalyzes the dephosphorylation of undecaprenyl diphosphate (UPP). Confers resistance to bacitracin. The protein is Undecaprenyl-diphosphatase of Desulforapulum autotrophicum (strain ATCC 43914 / DSM 3382 / VKM B-1955 / HRM2) (Desulfobacterium autotrophicum).